We begin with the raw amino-acid sequence, 309 residues long: Ribonuclease Z (309 aa).

The Zn(2+) site is built by H63, H65, D67, H68, H145, D216, and H274. D67 functions as the Proton acceptor in the catalytic mechanism.

The protein belongs to the RNase Z family. In terms of assembly, homodimer. Zn(2+) is required as a cofactor.

The catalysed reaction is Endonucleolytic cleavage of RNA, removing extra 3' nucleotides from tRNA precursor, generating 3' termini of tRNAs. A 3'-hydroxy group is left at the tRNA terminus and a 5'-phosphoryl group is left at the trailer molecule.. Functionally, zinc phosphodiesterase, which displays some tRNA 3'-processing endonuclease activity. Probably involved in tRNA maturation, by removing a 3'-trailer from precursor tRNA. The chain is Ribonuclease Z from Streptococcus pneumoniae serotype 19F (strain G54).